The following is a 547-amino-acid chain: KsdD-like steroid dehydrogenase MSMEG_5835 (547 aa).

Residue 5–36 (DVIVVGAGLAGLVAACELVERGHSVIIVDQEN) participates in FAD binding.

Belongs to the FAD-dependent oxidoreductase 2 family. Requires FAD as cofactor.

Its pathway is lipid metabolism; steroid biosynthesis. Its function is as follows. Able to catalyze the elimination of the C-1 and C-2 hydrogen atoms of the A-ring from the polycyclic ring structure of 3-ketosteroids, but the ketosteroid dehydrogenase activity is low compared to KsdD in the cholesterol degradation process. The low activity could be due to different substrate specificity. The sequence is that of KsdD-like steroid dehydrogenase MSMEG_5835 from Mycolicibacterium smegmatis (strain ATCC 700084 / mc(2)155) (Mycobacterium smegmatis).